The primary structure comprises 368 residues: UDP-N-acetylglucosamine--N-acetylmuramyl-(pentapeptide) pyrophosphoryl-undecaprenol N-acetylglucosamine transferase (368 aa).

Residues 10 to 12 (TGG), Asn126, Ser200, Ile255, and Gln300 contribute to the UDP-N-acetyl-alpha-D-glucosamine site.

This sequence belongs to the glycosyltransferase 28 family. MurG subfamily.

It is found in the cell membrane. It catalyses the reaction Mur2Ac(oyl-L-Ala-gamma-D-Glu-L-Lys-D-Ala-D-Ala)-di-trans,octa-cis-undecaprenyl diphosphate + UDP-N-acetyl-alpha-D-glucosamine = beta-D-GlcNAc-(1-&gt;4)-Mur2Ac(oyl-L-Ala-gamma-D-Glu-L-Lys-D-Ala-D-Ala)-di-trans,octa-cis-undecaprenyl diphosphate + UDP + H(+). Its pathway is cell wall biogenesis; peptidoglycan biosynthesis. In terms of biological role, cell wall formation. Catalyzes the transfer of a GlcNAc subunit on undecaprenyl-pyrophosphoryl-MurNAc-pentapeptide (lipid intermediate I) to form undecaprenyl-pyrophosphoryl-MurNAc-(pentapeptide)GlcNAc (lipid intermediate II). The chain is UDP-N-acetylglucosamine--N-acetylmuramyl-(pentapeptide) pyrophosphoryl-undecaprenol N-acetylglucosamine transferase from Lactobacillus acidophilus (strain ATCC 700396 / NCK56 / N2 / NCFM).